The sequence spans 228 residues: Cytidylate kinase (228 aa).

17 to 25 (GPTASGKGT) contributes to the ATP binding site.

It belongs to the cytidylate kinase family. Type 1 subfamily.

It is found in the cytoplasm. The catalysed reaction is CMP + ATP = CDP + ADP. The enzyme catalyses dCMP + ATP = dCDP + ADP. In Burkholderia mallei (strain NCTC 10247), this protein is Cytidylate kinase.